The primary structure comprises 462 residues: tRNA modification GTPase MnmE (462 aa).

(6S)-5-formyl-5,6,7,8-tetrahydrofolate contacts are provided by Arg27, Glu89, and Arg128. One can recognise a TrmE-type G domain in the interval 224–383 (GLATAIVGRP…LEAQIAKLFF (160 aa)). A K(+)-binding site is contributed by Asn234. Residues 234–239 (NVGKSS), 253–259 (TDVAGTT), and 278–281 (DTAG) contribute to the GTP site. Ser238 lines the Mg(2+) pocket. Thr253, Val255, and Thr258 together coordinate K(+). Thr259 is a binding site for Mg(2+). Lys462 is a binding site for (6S)-5-formyl-5,6,7,8-tetrahydrofolate.

The protein belongs to the TRAFAC class TrmE-Era-EngA-EngB-Septin-like GTPase superfamily. TrmE GTPase family. Homodimer. Heterotetramer of two MnmE and two MnmG subunits. The cofactor is K(+).

Its subcellular location is the cytoplasm. Its function is as follows. Exhibits a very high intrinsic GTPase hydrolysis rate. Involved in the addition of a carboxymethylaminomethyl (cmnm) group at the wobble position (U34) of certain tRNAs, forming tRNA-cmnm(5)s(2)U34. The polypeptide is tRNA modification GTPase MnmE (Latilactobacillus sakei subsp. sakei (strain 23K) (Lactobacillus sakei subsp. sakei)).